A 169-amino-acid polypeptide reads, in one-letter code: EP300-interacting inhibitor of differentiation 1 (169 aa).

A disordered region spans residues 31 to 50; it reads GRGARGPAPEEGPMEEEAGP. The interaction with NR0B2 stretch occupies residues 54 to 120; sequence RAQRGLFPEA…AGDALDGGFQ (67 aa). Positions 150-154 match the LXCXE motif motif; it reads LGCDE.

In terms of assembly, interacts via its LXCXE motif with the entire pocket region of RB1. Interacts with EP300, NR0B2 and TRIM27. Expressed in all adult tissues examined and during embryogenesis.

The protein resides in the nucleus. Its subcellular location is the cytoplasm. In terms of biological role, interacts with RB1 and EP300 and acts as a repressor of MYOD1 transactivation. Inhibits EP300 and CBP histone acetyltransferase activity. May be involved in coupling cell cycle exit to the transcriptional activation of genes required for cellular differentiation. May act as a candidate coinhibitory factor for NR0B2 that can be directly linked to transcription inhibitory mechanisms. The polypeptide is EP300-interacting inhibitor of differentiation 1 (Mus musculus (Mouse)).